The primary structure comprises 162 residues: UPF0114 protein PSPA7_5214 (162 aa).

Transmembrane regions (helical) follow at residues 15-35 (LLAPIYMGLSLALLALTIKFF), 53-73 (LILVLLSLIDMALVGGLLVMV), and 136-156 (LMWYVIIHMTFVLSAFAMGYL).

This sequence belongs to the UPF0114 family.

It localises to the cell membrane. This Pseudomonas paraeruginosa (strain DSM 24068 / PA7) (Pseudomonas aeruginosa (strain PA7)) protein is UPF0114 protein PSPA7_5214.